The chain runs to 852 residues: Alanine--tRNA ligase (852 aa).

His-554, His-558, Cys-656, and His-660 together coordinate Zn(2+).

It belongs to the class-II aminoacyl-tRNA synthetase family. Requires Zn(2+) as cofactor.

It localises to the cytoplasm. It carries out the reaction tRNA(Ala) + L-alanine + ATP = L-alanyl-tRNA(Ala) + AMP + diphosphate. Its function is as follows. Catalyzes the attachment of alanine to tRNA(Ala) in a two-step reaction: alanine is first activated by ATP to form Ala-AMP and then transferred to the acceptor end of tRNA(Ala). Also edits incorrectly charged Ser-tRNA(Ala) and Gly-tRNA(Ala) via its editing domain. In Campylobacter concisus (strain 13826), this protein is Alanine--tRNA ligase.